We begin with the raw amino-acid sequence, 1272 residues long: Magnesium-chelatase subunit H (1272 aa).

This sequence belongs to the Mg-chelatase subunit H family.

The enzyme catalyses protoporphyrin IX + Mg(2+) + ATP + H2O = Mg-protoporphyrin IX + ADP + phosphate + 3 H(+). It participates in porphyrin-containing compound metabolism; bacteriochlorophyll biosynthesis (light-independent). Functionally, involved in bacteriochlorophyll pigment biosynthesis; introduces a magnesium ion into protoporphyrin IX to yield Mg-protoroporphyrin IX. The sequence is that of Magnesium-chelatase subunit H (bchH) from Chlorobaculum parvum (strain DSM 263 / NCIMB 8327) (Chlorobium vibrioforme subsp. thiosulfatophilum).